We begin with the raw amino-acid sequence, 354 residues long: tRNA pseudouridine synthase D (354 aa).

The active-site Nucleophile is D86. A TRUD domain is found at 162-309; the sequence is GVPNYFGPQR…LEVGRRALRL (148 aa).

This sequence belongs to the pseudouridine synthase TruD family.

It catalyses the reaction uridine(13) in tRNA = pseudouridine(13) in tRNA. In terms of biological role, responsible for synthesis of pseudouridine from uracil-13 in transfer RNAs. This chain is tRNA pseudouridine synthase D, found in Methylococcus capsulatus (strain ATCC 33009 / NCIMB 11132 / Bath).